Consider the following 906-residue polypeptide: Protein translocase subunit SecA (906 aa).

ATP contacts are provided by residues Gln-87, 105–109 (GEGKT), and Asp-513. A disordered region spans residues 860–906 (QVNKGEVVSDENTGDDTFVRNEKKVGRNEPCPCGSGKKYKQCHGKLD). Over residues 876–886 (TFVRNEKKVGR) the composition is skewed to basic and acidic residues. Zn(2+) is bound by residues Cys-890, Cys-892, Cys-901, and His-902. The segment covering 896–906 (KKYKQCHGKLD) has biased composition (basic residues).

It belongs to the SecA family. Monomer and homodimer. Part of the essential Sec protein translocation apparatus which comprises SecA, SecYEG and auxiliary proteins SecDF-YajC and YidC. It depends on Zn(2+) as a cofactor.

It localises to the cell inner membrane. Its subcellular location is the cytoplasm. It carries out the reaction ATP + H2O + cellular proteinSide 1 = ADP + phosphate + cellular proteinSide 2.. In terms of biological role, part of the Sec protein translocase complex. Interacts with the SecYEG preprotein conducting channel. Has a central role in coupling the hydrolysis of ATP to the transfer of proteins into and across the cell membrane, serving both as a receptor for the preprotein-SecB complex and as an ATP-driven molecular motor driving the stepwise translocation of polypeptide chains across the membrane. This chain is Protein translocase subunit SecA, found in Psychromonas ingrahamii (strain DSM 17664 / CCUG 51855 / 37).